The following is a 444-amino-acid chain: Inward rectifier potassium channel 4 (444 aa).

Topologically, residues 1-55 (MHGHNRNGQAHVPRRKRRNRFVKKNGQCNVYFANLSNKSQRYMADIFTTCVDTRW) are cytoplasmic. Residues 56 to 80 (RYMLMLFSAAFLVSWLFFGLLFWCI) form a helical membrane-spanning segment. The Extracellular portion of the chain corresponds to 81–119 (AFFHGDLEASPSVPAAGAPGGNGGAAPAAPKPCIMHVNG). Residues 120–131 (FLGAFLFSVETQ) constitute an intramembrane region (helical; Pore-forming). Residues 132-138 (TTIGYGF) constitute an intramembrane region (pore-forming). The Selectivity filter signature appears at 133–138 (TIGYGF). Topologically, residues 139–147 (RCVTEECPL) are extracellular. Residues 148–169 (AVIAVVVQSIVGCVIDSFMIGT) form a helical membrane-spanning segment. The Cytoplasmic portion of the chain corresponds to 170 to 444 (IMAKMARPKK…NISYRRESAI (275 aa)). Positions 442–444 (SAI) match the PDZ-binding motif.

It belongs to the inward rectifier-type potassium channel (TC 1.A.2.1) family. KCNJ4 subfamily. As to quaternary structure, homomultimeric and heteromultimeric association with KCNJ2 and KCNJ12. Interacts with DLG2 and DLG4. Associates, via its PDZ-recognition domain, with a complex containing LIN7A, LIN7B, LIN7C, DLG1, CASK and APBA1. Interacts with TAX1BP3. TAX1BP3 competes with LIN7 family members for KCNJ4 binding.

Its subcellular location is the cell membrane. It localises to the postsynaptic cell membrane. It is found in the cytoplasmic vesicle membrane. The catalysed reaction is K(+)(in) = K(+)(out). In terms of biological role, inward rectifier potassium channels are characterized by a greater tendency to allow potassium to flow into the cell rather than out of it. Their voltage dependence is regulated by the concentration of extracellular potassium; as external potassium is raised, the voltage range of the channel opening shifts to more positive voltages. The inward rectification is mainly due to the blockage of outward current by internal magnesium. Can be blocked by extracellular barium and cesium. The protein is Inward rectifier potassium channel 4 (KCNJ4) of Mesocricetus auratus (Golden hamster).